Here is a 725-residue protein sequence, read N- to C-terminus: Manganese-exporting P-type ATPase (725 aa).

The HMA domain maps to 25-92 (GRMRIQIEWV…AISGAAHVAA (68 aa)). 6 helical membrane passes run 101–119 (HSSD…GAAA), 142–160 (LVAS…RGAL), 165–179 (TGTD…IASL), 188–202 (LAVL…YLQD), 335–359 (VGEN…AITK), and 365–383 (MTVL…TPTA). The active-site 4-aspartylphosphate intermediate is the Asp-416. Mg(2+)-binding residues include Asp-416, Thr-418, and Asp-618. Transmembrane regions (helical) follow at residues 669-688 (AVEV…AAGL) and 698-717 (PVLA…ANSS).

Belongs to the cation transport ATPase (P-type) (TC 3.A.3) family. Type IB subfamily.

The protein localises to the cell membrane. It carries out the reaction Mn(2+)(in) + ATP + H2O = Mn(2+)(out) + ADP + phosphate + H(+). Functionally, high affinity, slow turnover Mn(2+) transporting ATPase. This Mycobacterium leprae (strain TN) protein is Manganese-exporting P-type ATPase (ctpC).